The sequence spans 428 residues: Adenylosuccinate synthetase (428 aa).

GTP is bound by residues 12–18 (GDEGKGK) and 40–42 (GHS). Catalysis depends on D13, which acts as the Proton acceptor. Mg(2+) contacts are provided by D13 and G40. IMP contacts are provided by residues 13–16 (DEGK), 38–41 (NAGH), T128, R142, Q223, T238, and R302. H41 acts as the Proton donor in catalysis. 298–304 (VTTGRPR) is a substrate binding site. GTP contacts are provided by residues R304, 330 to 332 (KLD), and 412 to 414 (GTG).

This sequence belongs to the adenylosuccinate synthetase family. Homodimer. Mg(2+) is required as a cofactor.

The protein localises to the cytoplasm. It carries out the reaction IMP + L-aspartate + GTP = N(6)-(1,2-dicarboxyethyl)-AMP + GDP + phosphate + 2 H(+). Its pathway is purine metabolism; AMP biosynthesis via de novo pathway; AMP from IMP: step 1/2. In terms of biological role, plays an important role in the de novo pathway of purine nucleotide biosynthesis. Catalyzes the first committed step in the biosynthesis of AMP from IMP. In Bifidobacterium longum subsp. infantis (strain ATCC 15697 / DSM 20088 / JCM 1222 / NCTC 11817 / S12), this protein is Adenylosuccinate synthetase.